Here is a 296-residue protein sequence, read N- to C-terminus: Ribosomal RNA small subunit methyltransferase H (296 aa).

S-adenosyl-L-methionine-binding positions include 38 to 40 (GAH), Glu-57, Phe-80, Asp-103, and His-110.

The protein belongs to the methyltransferase superfamily. RsmH family.

Its subcellular location is the cytoplasm. The catalysed reaction is cytidine(1402) in 16S rRNA + S-adenosyl-L-methionine = N(4)-methylcytidine(1402) in 16S rRNA + S-adenosyl-L-homocysteine + H(+). Specifically methylates the N4 position of cytidine in position 1402 (C1402) of 16S rRNA. This chain is Ribosomal RNA small subunit methyltransferase H, found in Borrelia garinii subsp. bavariensis (strain ATCC BAA-2496 / DSM 23469 / PBi) (Borreliella bavariensis).